The following is a 319-amino-acid chain: MamJ paralog LimJ (319 aa).

2 disordered regions span residues 1–59 (MMME…PAPV) and 145–176 (AAAP…TETE). The segment covering 30–52 (AALAPAADAEIPASSAPEPAAPI) has biased composition (low complexity). Over residues 150-164 (PEPEPVPEPEPEPEP) the composition is skewed to acidic residues.

The protein belongs to the magnetosome MamJ protein family.

The protein resides in the magnetosome. Its function is as follows. Regulates the dynamic behavior of MamK filaments; paralog MamJ also promotes MamK turnover. At least one other protein besides MamJ and LimJ is required for MamK turnover. Might connect magnetosomes to MamK filaments. The polypeptide is MamJ paralog LimJ (Paramagnetospirillum magneticum (strain ATCC 700264 / AMB-1) (Magnetospirillum magneticum)).